The primary structure comprises 195 residues: dTTP/UTP pyrophosphatase (195 aa).

Residue D73 is the Proton acceptor of the active site.

This sequence belongs to the Maf family. YhdE subfamily. The cofactor is a divalent metal cation.

Its subcellular location is the cytoplasm. The catalysed reaction is dTTP + H2O = dTMP + diphosphate + H(+). It catalyses the reaction UTP + H2O = UMP + diphosphate + H(+). Functionally, nucleoside triphosphate pyrophosphatase that hydrolyzes dTTP and UTP. May have a dual role in cell division arrest and in preventing the incorporation of modified nucleotides into cellular nucleic acids. The chain is dTTP/UTP pyrophosphatase from Deinococcus radiodurans (strain ATCC 13939 / DSM 20539 / JCM 16871 / CCUG 27074 / LMG 4051 / NBRC 15346 / NCIMB 9279 / VKM B-1422 / R1).